A 319-amino-acid chain; its full sequence is Exopolyphosphatase 2 (319 aa).

It belongs to the GppA/Ppx family. As to quaternary structure, homodimer.

It carries out the reaction [phosphate](n) + H2O = [phosphate](n-1) + phosphate + H(+). Its activity is regulated as follows. Exopolyphosphatase activity is inhibited by ppGpp alarmones produced during the bacterial stringent response. Its function is as follows. Degradation of inorganic polyphosphates (polyP). Releases orthophosphate processively from the ends of the polyP chain. Prefers long-chain length polyphosphates as substrates. The sequence is that of Exopolyphosphatase 2 from Mycobacterium tuberculosis (strain CDC 1551 / Oshkosh).